Reading from the N-terminus, the 408-residue chain is Zinc finger protein 764 (408 aa).

In terms of domain architecture, KRAB spans 26-97 (VSFADVAVYF…AAQDPEVAKC (72 aa)). The segment at 91-167 (DPEVAKCQTQ…GRPSLCAHPP (77 aa)) is disordered. C2H2-type zinc fingers lie at residues 175–197 (HGCY…VYSH), 203–225 (FHCT…RAIH), 231–253 (HRCL…LRVH), 259–281 (YGCA…RRVH), 287–309 (FPCP…VRTH), 315–337 (YPCP…RRTH), and 343–365 (YPCP…QWVH).

Belongs to the krueppel C2H2-type zinc-finger protein family. As to quaternary structure, interacts (via KRAB domain) with NR3C1/GR (via NR LBD domain); the interaction regulates transcription factor activity of NR3C1 by directing its actions toward certain biologic pathways.

It is found in the nucleus. Functionally, zinc finger protein that functions as a cofactor for steroid hormone receptors, such as NR3C1/GR. Directs NR3C1/GR transcriptional activity toward specific biologic pathways by changing NR3C1/GR binding and transcriptional activity on the glucocorticoid-responsive genes. The chain is Zinc finger protein 764 from Homo sapiens (Human).